Consider the following 250-residue polypeptide: 1-(5-phosphoribosyl)-5-[(5-phosphoribosylamino)methylideneamino] imidazole-4-carboxamide isomerase (250 aa).

Catalysis depends on Asp12, which acts as the Proton acceptor. Asp133 (proton donor) is an active-site residue.

It belongs to the HisA/HisF family.

It is found in the cytoplasm. The catalysed reaction is 1-(5-phospho-beta-D-ribosyl)-5-[(5-phospho-beta-D-ribosylamino)methylideneamino]imidazole-4-carboxamide = 5-[(5-phospho-1-deoxy-D-ribulos-1-ylimino)methylamino]-1-(5-phospho-beta-D-ribosyl)imidazole-4-carboxamide. The protein operates within amino-acid biosynthesis; L-histidine biosynthesis; L-histidine from 5-phospho-alpha-D-ribose 1-diphosphate: step 4/9. This Zymomonas mobilis subsp. mobilis (strain ATCC 31821 / ZM4 / CP4) protein is 1-(5-phosphoribosyl)-5-[(5-phosphoribosylamino)methylideneamino] imidazole-4-carboxamide isomerase.